The sequence spans 257 residues: Dihydroorotate dehydrogenase B (NAD(+)), electron transfer subunit (257 aa).

Residues 2–101 (IRQEKMRVVS…LGPIGNGFPV (100 aa)) enclose the FAD-binding FR-type domain. FAD is bound by residues 52–55 (RPIS), 69–71 (IYR), and 76–77 (GT). The [2Fe-2S] cluster site is built by Cys-220, Cys-225, Cys-228, and Cys-244.

This sequence belongs to the PyrK family. As to quaternary structure, heterotetramer of 2 PyrK and 2 PyrD type B subunits. [2Fe-2S] cluster is required as a cofactor. Requires FAD as cofactor.

The protein operates within pyrimidine metabolism; UMP biosynthesis via de novo pathway; orotate from (S)-dihydroorotate (NAD(+) route): step 1/1. Its function is as follows. Responsible for channeling the electrons from the oxidation of dihydroorotate from the FMN redox center in the PyrD type B subunit to the ultimate electron acceptor NAD(+). The chain is Dihydroorotate dehydrogenase B (NAD(+)), electron transfer subunit from Lysinibacillus sphaericus (strain C3-41).